A 175-amino-acid polypeptide reads, in one-letter code: DELTA-stichotoxin-She4b (175 aa).

Residues 1 to 10 (ALAGTIIAGA) form a plays an important role in the hemolytic activity region. The interval 9–28 (GASLTFQVLDKVLEELGKVS) is N-terminal region. Residues serine 52, valine 85, serine 103, proline 105, tyrosine 131, tyrosine 135, and tyrosine 136 each contribute to the phosphocholine site. A trp-rich region, which is important for the binding to lipid membrane region spans residues 103–118 (SVPFDYNWYSNWWDVK). Positions 141-143 (RGD) match the Cell attachment site, crucial for protein stability motif.

Octamer or nonamer in membranes. Monomer in the soluble state. Originally described as forming tetramer in the presence of a lipidic interface. In terms of tissue distribution, expressed in tentacles and mesenteric filaments.

The protein resides in the secreted. It localises to the nematocyst. The protein localises to the target cell membrane. In terms of biological role, pore-forming protein that forms cations-selective hydrophilic pores of around 1 nm and causes cardiac stimulation and cytolysis. Pore formation is a multi-step process that involves specific recognition of membrane sphingomyelin (but neither cholesterol nor phosphatidylcholine) using aromatic rich region and adjacent phosphocholine (POC) binding site, firm binding to the membrane (mainly driven by hydrophobic interactions) accompanied by the transfer of the N-terminal region to the lipid-water interface and finally pore formation after oligomerization of monomers. Cytolytic effects include red blood cells hemolysis, platelet aggregation and lysis, cytotoxic and cytostatic effects on fibroblasts. Lethality in mammals has been ascribed to severe vasospasm of coronary vessels, cardiac arrhythmia, and inotropic effects. This Stichodactyla helianthus (Sun anemone) protein is DELTA-stichotoxin-She4b.